Consider the following 289-residue polypeptide: ATP phosphoribosyltransferase (289 aa).

Belongs to the ATP phosphoribosyltransferase family. Long subfamily. Requires Mg(2+) as cofactor.

Its subcellular location is the cytoplasm. The catalysed reaction is 1-(5-phospho-beta-D-ribosyl)-ATP + diphosphate = 5-phospho-alpha-D-ribose 1-diphosphate + ATP. It participates in amino-acid biosynthesis; L-histidine biosynthesis; L-histidine from 5-phospho-alpha-D-ribose 1-diphosphate: step 1/9. With respect to regulation, feedback inhibited by histidine. Catalyzes the condensation of ATP and 5-phosphoribose 1-diphosphate to form N'-(5'-phosphoribosyl)-ATP (PR-ATP). Has a crucial role in the pathway because the rate of histidine biosynthesis seems to be controlled primarily by regulation of HisG enzymatic activity. In Koribacter versatilis (strain Ellin345), this protein is ATP phosphoribosyltransferase.